A 695-amino-acid polypeptide reads, in one-letter code: MDLLRLSRLFSGPRPIGLSVLQHLDLVGSTRWTGGREGPARLRAAFCGSSSPLPLGSGNQKEMSSLCSDSSKLSTVAPQEEAEEESFGSLSGKFSSRRIFHKSTAQLYNLQLKEQGGEEEELEPRPWRGRRNTQYWYFFQCKRLIKEGKLAEALDLFERQMLKEERLQPLECNYTVLIGGCGRVGYLKKAFRLFNDMKKRDLEPSDATYTALFNVCAESPWKDSALQSALKLRQQLQARNFQLNLKTYHALLKVAAKCADLRLCLDVFKEIIQRGHAVTEETFCFLLVGCIQDKKTGFRQAMQVWRQMLSLGIKPSRHGYNLLLEAARDCGLGDPEVASRLLLTSQEETILLPPPKGRHMAGRKVQAKTVHGVSLRHVEALERQLFLEPSQKLEGPPALPEARVTSRTQPEVETTAEPGHTVALTPLASKPTHLELEVSLLSLGTLSPAVVSFGTVATPADRLALMGGLEGFLGKMTEHGLQPDIKTLTLLAEVVEPGSTAESSLLSVLDRHRVEADVTFFNTLIRKKSKLGDLEGAKALLPILAKKGIVPNLRTFCNLAIGCHRPRDGMQLLADMKKSQVSPNIHIYSTLINAALKKLDYTYLISILKDMRQNSVPVNEVVVRQLEFAAEYPPTFDRYKGKNTYLEKIDGFRAYYKQWLKAMPAEEAPHPWQEFQNKPVGDQDTTDKAGGLRDG.

PPR repeat units follow at residues 133–169 (TQYWYFFQCKRLIKEGKLAEALDLFERQMLKEERLQP), 170–204 (LECNYTVLIGGCGRVGYLKKAFRLFNDMKKRDLEP), 205–243 (SDATYTALFNVCAESPWKDSALQSALKLRQQLQARNFQL), 244–278 (NLKTYHALLKVAAKCADLRLCLDVFKEIIQRGHAV), 279–315 (TEETFCFLLVGCIQDKKTGFRQAMQVWRQMLSLGIKP), and 316–352 (SRHGYNLLLEAARDCGLGDPEVASRLLLTSQEETILL). Positions 391–416 (QKLEGPPALPEARVTSRTQPEVETTA) are disordered. PPR repeat units lie at residues 470–485 (EGFLGKMTEHGLQPDI), 517–551 (DVTFFNTLIRKKSKLGDLEGAKALLPILAKKGIVP), 552–583 (NLRTFCNLAIGCHRPRDGMQLLADMKKSQVSP), and 584–618 (NIHIYSTLINAALKKLDYTYLISILKDMRQNSVPV). Positions 672–695 (WQEFQNKPVGDQDTTDKAGGLRDG) are disordered. Basic and acidic residues predominate over residues 685–695 (TTDKAGGLRDG).

Belongs to the PTCD1 family. Associates with mitochondrial leucine tRNAs. Interacts with ELAC2.

It is found in the mitochondrion. The protein localises to the mitochondrion matrix. In terms of biological role, mitochondrial protein implicated in negative regulation of leucine tRNA levels, as well as negative regulation of mitochondria-encoded proteins and COX activity. Also affects the 3'-processing of mitochondrial tRNAs. The chain is Pentatricopeptide repeat-containing protein 1, mitochondrial (Ptcd1) from Mus musculus (Mouse).